Consider the following 158-residue polypeptide: Transcription elongation factor GreA (158 aa).

A coiled-coil region spans residues 47-75; it reads ENSEYDAAKDEQAFVEQRITQVEKMIRNA.

The protein belongs to the GreA/GreB family.

Its function is as follows. Necessary for efficient RNA polymerase transcription elongation past template-encoded arresting sites. The arresting sites in DNA have the property of trapping a certain fraction of elongating RNA polymerases that pass through, resulting in locked ternary complexes. Cleavage of the nascent transcript by cleavage factors such as GreA or GreB allows the resumption of elongation from the new 3'terminus. GreA releases sequences of 2 to 3 nucleotides. The sequence is that of Transcription elongation factor GreA from Oceanobacillus iheyensis (strain DSM 14371 / CIP 107618 / JCM 11309 / KCTC 3954 / HTE831).